Consider the following 548-residue polypeptide: Folylpolyglutamate synthase (548 aa).

130–133 contributes to the ATP binding site; the sequence is GKGS. Mg(2+) is bound by residues Ser-157, Glu-234, and His-262. 2 residues coordinate ATP: Arg-382 and Asp-396.

The protein belongs to the folylpolyglutamate synthase family. A monovalent cation is required as a cofactor.

The protein resides in the mitochondrion inner membrane. The protein localises to the mitochondrion matrix. It is found in the cytoplasm. It carries out the reaction (6S)-5,6,7,8-tetrahydrofolyl-(gamma-L-Glu)(n) + L-glutamate + ATP = (6S)-5,6,7,8-tetrahydrofolyl-(gamma-L-Glu)(n+1) + ADP + phosphate + H(+). It participates in cofactor biosynthesis; tetrahydrofolylpolyglutamate biosynthesis. Catalyzes conversion of folates to polyglutamate derivatives allowing concentration of folate compounds in the cell and the intracellular retention of these cofactors, which are important substrates for most of the folate-dependent enzymes that are involved in one-carbon transfer reactions involved in purine, pyrimidine and amino acid synthesis. Required for methionine synthesis and maintenance of intact mitochondrial DNA. Involved in telomere maintenance. This is Folylpolyglutamate synthase from Saccharomyces cerevisiae (strain AWRI796) (Baker's yeast).